We begin with the raw amino-acid sequence, 401 residues long: Phosphoglycerate kinase (401 aa).

Substrate contacts are provided by residues 26–28 (DLN), Arg-41, 64–67 (HLGR), Arg-123, and Arg-156. ATP-binding positions include Lys-207, Gly-298, Glu-329, and 355–358 (GGDS).

The protein belongs to the phosphoglycerate kinase family. In terms of assembly, monomer.

It localises to the cytoplasm. It carries out the reaction (2R)-3-phosphoglycerate + ATP = (2R)-3-phospho-glyceroyl phosphate + ADP. Its pathway is carbohydrate degradation; glycolysis; pyruvate from D-glyceraldehyde 3-phosphate: step 2/5. The protein is Phosphoglycerate kinase of Bdellovibrio bacteriovorus (strain ATCC 15356 / DSM 50701 / NCIMB 9529 / HD100).